The following is a 325-amino-acid chain: 7,8-didemethyl-8-hydroxy-5-deazariboflavin synthase (325 aa).

Positions Met-1–Asn-241 constitute a Radical SAM core domain. 3 residues coordinate [4Fe-4S] cluster: Cys-15, Cys-19, and Cys-22.

This sequence belongs to the radical SAM superfamily. CofG family. As to quaternary structure, consists of two subunits, CofG and CofH. It depends on [4Fe-4S] cluster as a cofactor.

It carries out the reaction 5-amino-5-(4-hydroxybenzyl)-6-(D-ribitylimino)-5,6-dihydrouracil + S-adenosyl-L-methionine = 7,8-didemethyl-8-hydroxy-5-deazariboflavin + 5'-deoxyadenosine + L-methionine + NH4(+) + H(+). It functions in the pathway cofactor biosynthesis; coenzyme F0 biosynthesis. Catalyzes the radical-mediated synthesis of 7,8-didemethyl-8-hydroxy-5-deazariboflavin from 5-amino-5-(4-hydroxybenzyl)-6-(D-ribitylimino)-5,6-dihydrouracil. The chain is 7,8-didemethyl-8-hydroxy-5-deazariboflavin synthase from Methanosarcina barkeri (strain Fusaro / DSM 804).